Here is a 395-residue protein sequence, read N- to C-terminus: Sulfate adenylyltransferase (395 aa).

Belongs to the sulfate adenylyltransferase family.

It catalyses the reaction sulfate + ATP + H(+) = adenosine 5'-phosphosulfate + diphosphate. It functions in the pathway sulfur metabolism; hydrogen sulfide biosynthesis; sulfite from sulfate: step 1/3. The protein is Sulfate adenylyltransferase of Synechococcus elongatus (strain ATCC 33912 / PCC 7942 / FACHB-805) (Anacystis nidulans R2).